The sequence spans 88 residues: ATP synthase subunit c (88 aa).

The next 2 membrane-spanning stretches (helical) occupy residues 10-30 (ILAA…GPGI) and 68-88 (GIYS…IRLL).

The protein belongs to the ATPase C chain family. F-type ATPases have 2 components, F(1) - the catalytic core - and F(0) - the membrane proton channel. F(1) has five subunits: alpha(3), beta(3), gamma(1), delta(1), epsilon(1). F(0) has three main subunits: a(1), b(2) and c(10-14). The alpha and beta chains form an alternating ring which encloses part of the gamma chain. F(1) is attached to F(0) by a central stalk formed by the gamma and epsilon chains, while a peripheral stalk is formed by the delta and b chains.

It is found in the cell membrane. Functionally, f(1)F(0) ATP synthase produces ATP from ADP in the presence of a proton or sodium gradient. F-type ATPases consist of two structural domains, F(1) containing the extramembraneous catalytic core and F(0) containing the membrane proton channel, linked together by a central stalk and a peripheral stalk. During catalysis, ATP synthesis in the catalytic domain of F(1) is coupled via a rotary mechanism of the central stalk subunits to proton translocation. Its function is as follows. Key component of the F(0) channel; it plays a direct role in translocation across the membrane. A homomeric c-ring of between 10-14 subunits forms the central stalk rotor element with the F(1) delta and epsilon subunits. The polypeptide is ATP synthase subunit c (Alkaliphilus oremlandii (strain OhILAs) (Clostridium oremlandii (strain OhILAs))).